Consider the following 387-residue polypeptide: Cytochrome b (387 aa).

Helical transmembrane passes span 32-52, 76-98, 113-133, and 179-199; these read FGSLLALCLGIQIVTGVTLAM, WLVRYLHSNTASAFFFLVYLHIG, TWAIGTVILIVMMATAFLGYV, and FFALHFLLPFVLAALALMHLI. The heme b site is built by H82 and H96. H183 and H197 together coordinate heme b. Residue H202 coordinates a ubiquinone. A run of 4 helical transmembrane segments spans residues 226-246, 290-310, 322-342, and 349-369; these read FIFKDLITIFIFFIVLSIFVF, LLGVIAMFAAILALMVMPITD, LSKVVFYIFVANFLILMQIGA, and FIEFGQISTIIYFAYFFVIVP.

This sequence belongs to the cytochrome b family. In terms of assembly, fungal cytochrome b-c1 complex contains 10 subunits; 3 respiratory subunits, 2 core proteins and 5 low-molecular weight proteins. Cytochrome b-c1 complex is a homodimer. The cofactor is heme b.

It is found in the mitochondrion inner membrane. Component of the ubiquinol-cytochrome c reductase complex (complex III or cytochrome b-c1 complex) that is part of the mitochondrial respiratory chain. The b-c1 complex mediates electron transfer from ubiquinol to cytochrome c. Contributes to the generation of a proton gradient across the mitochondrial membrane that is then used for ATP synthesis. The polypeptide is Cytochrome b (cob) (Emericella nidulans (Aspergillus nidulans)).